Here is a 113-residue protein sequence, read N- to C-terminus: Gonadotropin subunit beta (113 aa).

6 disulfides stabilise this stretch: Cys6–Cys54, Cys20–Cys69, Cys23–Cys107, Cys31–Cys85, Cys35–Cys87, and Cys90–Cys97. N-linked (GlcNAc...) asparagine glycosylation occurs at Asn10.

It belongs to the glycoprotein hormones subunit beta family. Heterodimer of an alpha and a beta chain.

The protein localises to the secreted. Its function is as follows. Involved in gametogenesis and steroidogenesis. The chain is Gonadotropin subunit beta (cgb) from Muraenesox cinereus (Daggertooth pike conger).